Consider the following 765-residue polypeptide: Multifunctional tryptophan biosynthesis protein (765 aa).

Residues 2–196 (ATLLIDNYDS…LSLRGGNWDE (195 aa)) form the Glutamine amidotransferase type-1 domain. 53–55 (GPG) serves as a coordination point for L-glutamine. The Nucleophile; for GATase activity role is filled by Cys-81. Residues Gln-85 and 131 to 132 (SL) each bind L-glutamine. Catalysis depends on for GATase activity residues His-170 and Glu-172. The interval 231–494 (TILSRIYAQR…NLKEFVAELL (264 aa)) is indole-3-glycerol phosphate synthase. The tract at residues 512–765 (QVKICGISSV…VEKAKSINLQ (254 aa)) is N-(5'-phosphoribosyl)anthranilate isomerase.

It catalyses the reaction N-(5-phospho-beta-D-ribosyl)anthranilate = 1-(2-carboxyphenylamino)-1-deoxy-D-ribulose 5-phosphate. It carries out the reaction 1-(2-carboxyphenylamino)-1-deoxy-D-ribulose 5-phosphate + H(+) = (1S,2R)-1-C-(indol-3-yl)glycerol 3-phosphate + CO2 + H2O. The catalysed reaction is chorismate + L-glutamine = anthranilate + pyruvate + L-glutamate + H(+). It functions in the pathway amino-acid biosynthesis; L-tryptophan biosynthesis; L-tryptophan from chorismate: step 1/5. Its pathway is amino-acid biosynthesis; L-tryptophan biosynthesis; L-tryptophan from chorismate: step 3/5. The protein operates within amino-acid biosynthesis; L-tryptophan biosynthesis; L-tryptophan from chorismate: step 4/5. Trifunctional enzyme bearing the Gln amidotransferase (GATase) domain of anthranilate synthase, indole-glycerolphosphate synthase, and phosphoribosylanthranilate isomerase activities. This chain is Multifunctional tryptophan biosynthesis protein (trp1), found in Phycomyces blakesleeanus.